The chain runs to 376 residues: 3-dehydroquinate synthase (376 aa).

Residues G115–D119, T139–S140, K152, and K161 each bind NAD(+). Zn(2+) contacts are provided by E194, H256, and H275.

The protein belongs to the sugar phosphate cyclases superfamily. Dehydroquinate synthase family. Co(2+) serves as cofactor. Zn(2+) is required as a cofactor. Requires NAD(+) as cofactor.

The protein localises to the cytoplasm. The catalysed reaction is 7-phospho-2-dehydro-3-deoxy-D-arabino-heptonate = 3-dehydroquinate + phosphate. The protein operates within metabolic intermediate biosynthesis; chorismate biosynthesis; chorismate from D-erythrose 4-phosphate and phosphoenolpyruvate: step 2/7. In terms of biological role, catalyzes the conversion of 3-deoxy-D-arabino-heptulosonate 7-phosphate (DAHP) to dehydroquinate (DHQ). The sequence is that of 3-dehydroquinate synthase from Rhizobium johnstonii (strain DSM 114642 / LMG 32736 / 3841) (Rhizobium leguminosarum bv. viciae).